Consider the following 361-residue polypeptide: MAGNSIGQHFRVTTFGESHGIALGCIVDGCPPGLEITEADLQTDLDRRRPGTSRYTTQRREPDEVKILSGVFEGQTTGTSIGLMIENTDQRSKDYSDIKDKFRPGHADYTYHQKYGVRDYRGGGRSSARETAMRVAAGAIAKKYLKDEFGVEIRAYLSQMGDVSIDKVDWNEIENNAFFCPDADKVEAFDQLIRDLKKEGDSIGAKIQVVATNVPVGLGEPVFDRLDADIAHALMSINAVKGVEIGDGFDVVNQKGSDHRDTLSPEGFGSNHAGGILGGISTGQEIVANIALKPTSSITVPGETITKEGEPTQLITKGRHDPCVGIRAVPIAEAMLAIVVMDHLLRHRGQNHGVKTETPKI.

NADP(+)-binding residues include arginine 48 and arginine 54. FMN-binding positions include 125–127 (RSS), 238–239 (NA), glycine 278, 293–297 (KPTSS), and arginine 319.

Belongs to the chorismate synthase family. In terms of assembly, homotetramer. FMNH2 serves as cofactor.

The enzyme catalyses 5-O-(1-carboxyvinyl)-3-phosphoshikimate = chorismate + phosphate. The protein operates within metabolic intermediate biosynthesis; chorismate biosynthesis; chorismate from D-erythrose 4-phosphate and phosphoenolpyruvate: step 7/7. Catalyzes the anti-1,4-elimination of the C-3 phosphate and the C-6 proR hydrogen from 5-enolpyruvylshikimate-3-phosphate (EPSP) to yield chorismate, which is the branch point compound that serves as the starting substrate for the three terminal pathways of aromatic amino acid biosynthesis. This reaction introduces a second double bond into the aromatic ring system. The chain is Chorismate synthase from Vibrio campbellii (strain ATCC BAA-1116).